We begin with the raw amino-acid sequence, 287 residues long: 4-diphosphocytidyl-2-C-methyl-D-erythritol kinase (287 aa).

The active site involves Lys-22. 102–112 (PAAAGIGGGSS) contacts ATP. Residue Asp-139 is part of the active site.

This sequence belongs to the GHMP kinase family. IspE subfamily.

The enzyme catalyses 4-CDP-2-C-methyl-D-erythritol + ATP = 4-CDP-2-C-methyl-D-erythritol 2-phosphate + ADP + H(+). The protein operates within isoprenoid biosynthesis; isopentenyl diphosphate biosynthesis via DXP pathway; isopentenyl diphosphate from 1-deoxy-D-xylulose 5-phosphate: step 3/6. Catalyzes the phosphorylation of the position 2 hydroxy group of 4-diphosphocytidyl-2C-methyl-D-erythritol. The sequence is that of 4-diphosphocytidyl-2-C-methyl-D-erythritol kinase from Dinoroseobacter shibae (strain DSM 16493 / NCIMB 14021 / DFL 12).